The chain runs to 399 residues: Elongation factor Tu (399 aa).

The tr-type G domain occupies 10-209; the sequence is KPHVNIGTIG…EVDAYIPTPE (200 aa). The interval 19-26 is G1; the sequence is GHVDHGKT. 19–26 is a binding site for GTP; that stretch reads GHVDHGKT. Residue Thr-26 coordinates Mg(2+). The interval 60–64 is G2; that stretch reads GITIA. The G3 stretch occupies residues 81 to 84; sequence DCPG. GTP is bound by residues 81-85 and 136-139; these read DCPGH and NKQD. Residues 136–139 are G4; sequence NKQD. Positions 174 to 176 are G5; it reads SAL.

It belongs to the TRAFAC class translation factor GTPase superfamily. Classic translation factor GTPase family. EF-Tu/EF-1A subfamily. As to quaternary structure, monomer.

Its subcellular location is the cytoplasm. It catalyses the reaction GTP + H2O = GDP + phosphate + H(+). Its function is as follows. GTP hydrolase that promotes the GTP-dependent binding of aminoacyl-tRNA to the A-site of ribosomes during protein biosynthesis. This is Elongation factor Tu from Helicobacter pylori (strain Shi470).